The sequence spans 836 residues: Protein PDC2 (836 aa).

The region spanning 64–139 is the HTH CENPB-type domain; the sequence is ELIRRRKRAN…VKKLNINITG (76 aa). Residues 626 to 640 show a composition bias toward low complexity; sequence TTSTSVVSDSPSGTT. Residues 626 to 732 form a disordered region; sequence TTSTSVVSDS…NVQFGNGAGS (107 aa). Residues 641 to 651 are compositionally biased toward polar residues; it reads QKYNNISTYPN. A compositionally biased stretch (low complexity) spans 677–698; it reads GQELQNPQGQQQQEQQQQQQHQ. The segment covering 699–711 has biased composition (polar residues); it reads MSGYNFSPISNIE.

Its function is as follows. Essential for the synthesis of pyruvate decarboxylase. The polypeptide is Protein PDC2 (PDC2) (Candida albicans (Yeast)).